The chain runs to 243 residues: Sugar fermentation stimulation protein homolog (243 aa).

The protein belongs to the SfsA family.

In Lacticaseibacillus casei (strain BL23) (Lactobacillus casei), this protein is Sugar fermentation stimulation protein homolog.